A 307-amino-acid chain; its full sequence is Ornithine carbamoyltransferase (307 aa).

Carbamoyl phosphate-binding positions include 51-54, Gln78, Arg102, and 129-132; these read STRT and HPCQ. L-ornithine-binding positions include Asn160, Asp220, and 224–225; that span reads SM. Carbamoyl phosphate-binding positions include 260-261 and Arg288; that span reads CL.

It belongs to the aspartate/ornithine carbamoyltransferase superfamily. OTCase family.

The protein localises to the cytoplasm. It catalyses the reaction carbamoyl phosphate + L-ornithine = L-citrulline + phosphate + H(+). It participates in amino-acid biosynthesis; L-arginine biosynthesis; L-arginine from L-ornithine and carbamoyl phosphate: step 1/3. In terms of biological role, reversibly catalyzes the transfer of the carbamoyl group from carbamoyl phosphate (CP) to the N(epsilon) atom of ornithine (ORN) to produce L-citrulline. The protein is Ornithine carbamoyltransferase (argF) of Archaeoglobus fulgidus (strain ATCC 49558 / DSM 4304 / JCM 9628 / NBRC 100126 / VC-16).